We begin with the raw amino-acid sequence, 119 residues long: Ribonuclease P protein component (119 aa).

Belongs to the RnpA family. In terms of assembly, consists of a catalytic RNA component (M1 or rnpB) and a protein subunit.

The enzyme catalyses Endonucleolytic cleavage of RNA, removing 5'-extranucleotides from tRNA precursor.. Its function is as follows. RNaseP catalyzes the removal of the 5'-leader sequence from pre-tRNA to produce the mature 5'-terminus. It can also cleave other RNA substrates such as 4.5S RNA. The protein component plays an auxiliary but essential role in vivo by binding to the 5'-leader sequence and broadening the substrate specificity of the ribozyme. The sequence is that of Ribonuclease P protein component from Shewanella woodyi (strain ATCC 51908 / MS32).